The sequence spans 87 residues: Large ribosomal subunit protein eL20 (87 aa).

Belongs to the eukaryotic ribosomal protein eL20 family. Part of the 50S ribosomal subunit. Binds 23S rRNA.

This chain is Large ribosomal subunit protein eL20, found in Staphylothermus marinus (strain ATCC 43588 / DSM 3639 / JCM 9404 / F1).